The chain runs to 147 residues: Large ribosomal subunit protein uL15 (147 aa).

A disordered region spans residues 1 to 55; sequence MKLDNLAPQPGAKKRKRRVGRGIAAGQGASCGFGMRGQKSRSGRPTRPGFEGGQM. Positions 23–35 are enriched in gly residues; the sequence is IAAGQGASCGFGM.

The protein belongs to the universal ribosomal protein uL15 family. In terms of assembly, part of the 50S ribosomal subunit.

Functionally, binds to the 23S rRNA. This Synechococcus elongatus (strain ATCC 33912 / PCC 7942 / FACHB-805) (Anacystis nidulans R2) protein is Large ribosomal subunit protein uL15.